A 337-amino-acid polypeptide reads, in one-letter code: Holliday junction branch migration complex subunit RuvB (337 aa).

Residues 1–27 (MIEADRLVHAQPQGTEERDEQIDRAMR) are disordered. Residues 4 to 187 (ADRLVHAQPQ…FGIPLRLEFY (184 aa)) are large ATPase domain (RuvB-L). ATP is bound by residues Arg27, Gly68, Lys71, Thr72, Thr73, 134–136 (EDY), Arg177, Tyr187, and Arg224. Mg(2+) is bound at residue Thr72. The interval 188-258 (NVKDLSSIVT…VAESALDMLD (71 aa)) is small ATPAse domain (RuvB-S). The segment at 261-337 (VEGFDYMDRK…YQHFNLIQPE (77 aa)) is head domain (RuvB-H). Residues Arg297, Arg316, and Arg321 each coordinate DNA.

This sequence belongs to the RuvB family. In terms of assembly, homohexamer. Forms an RuvA(8)-RuvB(12)-Holliday junction (HJ) complex. HJ DNA is sandwiched between 2 RuvA tetramers; dsDNA enters through RuvA and exits via RuvB. An RuvB hexamer assembles on each DNA strand where it exits the tetramer. Each RuvB hexamer is contacted by two RuvA subunits (via domain III) on 2 adjacent RuvB subunits; this complex drives branch migration. In the full resolvosome a probable DNA-RuvA(4)-RuvB(12)-RuvC(2) complex forms which resolves the HJ.

The protein localises to the cytoplasm. The catalysed reaction is ATP + H2O = ADP + phosphate + H(+). The RuvA-RuvB-RuvC complex processes Holliday junction (HJ) DNA during genetic recombination and DNA repair, while the RuvA-RuvB complex plays an important role in the rescue of blocked DNA replication forks via replication fork reversal (RFR). RuvA specifically binds to HJ cruciform DNA, conferring on it an open structure. The RuvB hexamer acts as an ATP-dependent pump, pulling dsDNA into and through the RuvAB complex. RuvB forms 2 homohexamers on either side of HJ DNA bound by 1 or 2 RuvA tetramers; 4 subunits per hexamer contact DNA at a time. Coordinated motions by a converter formed by DNA-disengaged RuvB subunits stimulates ATP hydrolysis and nucleotide exchange. Immobilization of the converter enables RuvB to convert the ATP-contained energy into a lever motion, pulling 2 nucleotides of DNA out of the RuvA tetramer per ATP hydrolyzed, thus driving DNA branch migration. The RuvB motors rotate together with the DNA substrate, which together with the progressing nucleotide cycle form the mechanistic basis for DNA recombination by continuous HJ branch migration. Branch migration allows RuvC to scan DNA until it finds its consensus sequence, where it cleaves and resolves cruciform DNA. This Shewanella loihica (strain ATCC BAA-1088 / PV-4) protein is Holliday junction branch migration complex subunit RuvB.